The chain runs to 528 residues: RNA polymerase sigma factor SigA (528 aa).

Over residues 1–10 (MAATKASTAT) the composition is skewed to polar residues. The interval 1–211 (MAATKASTAT…FVWDEDESEA (211 aa)) is disordered. 3 stretches are compositionally biased toward low complexity: residues 19 to 31 (TKSPAASASGAKT), 38 to 56 (AKSASGSPPAKRATKPAAR), and 80 to 92 (AAKSAAAKAPSAR). A compositionally biased stretch (basic and acidic residues) spans 100–109 (APKDAQHEAA). Residues 110 to 173 (TDPEDALDSV…DDEDHEDLEA (64 aa)) are compositionally biased toward acidic residues. Residues 295 to 365 (LLEANLRLVV…TRAMADQART (71 aa)) form a sigma-70 factor domain-2 region. Residues 319-322 (DLIQ) carry the Interaction with polymerase core subunit RpoC motif. A sigma-70 factor domain-3 region spans residues 374–450 (EVINKLGRIQ…DSEAVVAVDA (77 aa)). The segment at 463–516 (VLDTLSEREAGVVRLRFGLTDGQPRTLDEIGQVYGVTRERIRQIESKTMSKLRH) is sigma-70 factor domain-4. The segment at residues 489–508 (LDEIGQVYGVTRERIRQIES) is a DNA-binding region (H-T-H motif).

It belongs to the sigma-70 factor family. RpoD/SigA subfamily. As to quaternary structure, interacts transiently with the RNA polymerase catalytic core.

The protein localises to the cytoplasm. Its function is as follows. Sigma factors are initiation factors that promote the attachment of RNA polymerase to specific initiation sites and are then released. This sigma factor is the primary sigma factor during exponential growth. The protein is RNA polymerase sigma factor SigA of Mycobacterium bovis (strain ATCC BAA-935 / AF2122/97).